Here is a 211-residue protein sequence, read N- to C-terminus: Pyridoxine/pyridoxamine 5'-phosphate oxidase (211 aa).

Substrate-binding positions include 7-10 and Lys65; that span reads RREY. FMN-binding positions include 60–65, 75–76, Arg81, Lys82, and Gln104; these read RIVLLK and YT. Substrate-binding residues include Tyr122, Arg126, and Ser130. Residues 139–140 and Trp184 contribute to the FMN site; that span reads QS. Position 190 to 192 (190 to 192) interacts with substrate; it reads RLH. Arg194 serves as a coordination point for FMN.

It belongs to the pyridoxamine 5'-phosphate oxidase family. As to quaternary structure, homodimer. It depends on FMN as a cofactor.

The enzyme catalyses pyridoxamine 5'-phosphate + O2 + H2O = pyridoxal 5'-phosphate + H2O2 + NH4(+). It carries out the reaction pyridoxine 5'-phosphate + O2 = pyridoxal 5'-phosphate + H2O2. Its pathway is cofactor metabolism; pyridoxal 5'-phosphate salvage; pyridoxal 5'-phosphate from pyridoxamine 5'-phosphate: step 1/1. It participates in cofactor metabolism; pyridoxal 5'-phosphate salvage; pyridoxal 5'-phosphate from pyridoxine 5'-phosphate: step 1/1. Catalyzes the oxidation of either pyridoxine 5'-phosphate (PNP) or pyridoxamine 5'-phosphate (PMP) into pyridoxal 5'-phosphate (PLP). This is Pyridoxine/pyridoxamine 5'-phosphate oxidase from Photobacterium profundum (strain SS9).